The primary structure comprises 891 residues: MMMNSTIRQGWQQVLKRFSIPASGDRLIISNPTDQPIGLFGAFDTSLQTLSQVGDDPEVLKQKIHIPTHLDIASALEASPRSFPWIFLTNSFCTFGGSIHAQNLQAFATAEFKSGFCYMNLLVPLSFDIIDAHADSFRVFVEQLPDMLGAYPSLSMVLNVMLHAATRFPEIVSSPVPTIAFDAESLQFHVTDKRGVPGMWNILKAGRVYELLSLAADGVGCEYMLYPVGAAPQYSFWKKSMDHFTSDRFVEFLAMQNLLASALEQDYTTHDALDALLAALQNAGYTNVVARERRFPNGHDPSTVWLNLSEAPISEKLTDLKRYLLVGHRSDDTADITHNVHQYVFEVLKTMSVQFSKRTNAYNRARFEVNHKVIWNAEYGRGPQQNAELEALVLFLNRQSLEIENILHRTTSPVVVTNWQPDVPTAAPEVSEGEPTHAVATPMTEAPAHATPVEVVNLPSTRSYWAETLVGVLTAVLGTIFALLTRALIRAKRLRRKPTFPWVTLDSGDEDDDHSGGGGGGPQTPGGQPPASPAHRTHQSRLSVQDIASDTSLLSVDLDEDTLSQYDETFQRIRRALFETSFTDILQNSARWISALEAMALADGNAPYTLLAQYLNGIEEAYTSFRNTGHVSRATLSSFFALEDSLRAAGIAFGATTPTQTIQNQFADSPARRWKTRFEQIACELGDASIKSLADLADIIDTERERSDLTQFDVLAASSISSLCRAVRIISDTTDPDAQLALVENATAMQNNINAILGTNVSIPFLSATRRLLVTRRIQQAGAENRSGATPETIQQLADAELIVSEANMFNEMATSQRDIANATQEATIREHVLSPVNALANVGMAAAFFRSGGMRSRALHPAMPTMPGVSAATGRPIFQAFRGRGHRLNR.

Positions 109-229 (TAEFKSGFCY…GCEYMLYPVG (121 aa)) constitute a Peptidase C6 domain. Residues Cys117 and His189 each act as for helper component proteinase activity in the active site. The interval 502-540 (WVTLDSGDEDDDHSGGGGGGPQTPGGQPPASPAHRTHQS) is disordered.

Belongs to the bymoviruses polyprotein 2 family. The viral RNA2 of bymoviruses is expressed as a single polyprotein which undergoes post-translational proteolytic processing resulting in the production of at least two individual proteins. The HC-pro cleaves its C-terminus autocatalytically (Potential).

It carries out the reaction Hydrolyzes a Gly-|-Gly bond at its own C-terminus, commonly in the sequence -Tyr-Xaa-Val-Gly-|-Gly, in the processing of the potyviral polyprotein.. This is Genome polyprotein 2 (RNA2) from Hordeum vulgare (Barley).